Reading from the N-terminus, the 299-residue chain is MFNQAAQELTTIRDVLRFAVSRFNEAGLFFGHGTDNAHDEAVYLILHTLNLPLDMLAPYLDAKLLEAEKEEVLAVIERRAVEHIPAAYLTHQAWQGEFDFYVDERVIVPRSFIYELLGDGLRPWIEYDELVHNALDLCTGSGCLAIQMAHHYPDAQIDAVDVSLDALEVAGINIEDYGLEERIQLIHTDLFEGLEGTYDLIVSNPPYVDAESVGALPEEYLHEPELALGSGADGLDATRQILLNAAKFLNPKGVLLVEIGHNRDVLEAAYPELPFTWLETSGGDGFVFLLTREQLLGEE.

This sequence belongs to the protein N5-glutamine methyltransferase family. PrmB subfamily.

The catalysed reaction is L-glutaminyl-[ribosomal protein uL3] + S-adenosyl-L-methionine = N(5)-methyl-L-glutaminyl-[ribosomal protein uL3] + S-adenosyl-L-homocysteine + H(+). Its function is as follows. Methylates large ribosomal subunit protein uL3 on a specific glutamine residue. In Neisseria gonorrhoeae (strain ATCC 700825 / FA 1090), this protein is Ribosomal protein uL3 glutamine methyltransferase.